The sequence spans 242 residues: ATP synthase subunit a (242 aa).

6 consecutive transmembrane segments (helical) span residues S29–Y49, F84–T104, I114–I134, F140–I160, V189–M209, and V210–L230.

The protein belongs to the ATPase A chain family. As to quaternary structure, F-type ATPases have 2 components, CF(1) - the catalytic core - and CF(0) - the membrane proton channel. CF(1) has five subunits: alpha(3), beta(3), gamma(1), delta(1), epsilon(1). CF(0) has three main subunits: a(1), b(2) and c(9-12). The alpha and beta chains form an alternating ring which encloses part of the gamma chain. CF(1) is attached to CF(0) by a central stalk formed by the gamma and epsilon chains, while a peripheral stalk is formed by the delta and b chains.

The protein resides in the cell inner membrane. Its function is as follows. Key component of the proton channel; it plays a direct role in the translocation of protons across the membrane. This Rickettsia prowazekii (strain Madrid E) protein is ATP synthase subunit a.